The chain runs to 430 residues: Methylenetetrahydrofolate--tRNA-(uracil-5-)-methyltransferase TrmFO (430 aa).

9–14 (GAGLAG) is an FAD binding site.

Belongs to the MnmG family. TrmFO subfamily. FAD is required as a cofactor.

The protein resides in the cytoplasm. It carries out the reaction uridine(54) in tRNA + (6R)-5,10-methylene-5,6,7,8-tetrahydrofolate + NADH + H(+) = 5-methyluridine(54) in tRNA + (6S)-5,6,7,8-tetrahydrofolate + NAD(+). The enzyme catalyses uridine(54) in tRNA + (6R)-5,10-methylene-5,6,7,8-tetrahydrofolate + NADPH + H(+) = 5-methyluridine(54) in tRNA + (6S)-5,6,7,8-tetrahydrofolate + NADP(+). Functionally, catalyzes the folate-dependent formation of 5-methyl-uridine at position 54 (M-5-U54) in all tRNAs. The chain is Methylenetetrahydrofolate--tRNA-(uracil-5-)-methyltransferase TrmFO from Fervidobacterium nodosum (strain ATCC 35602 / DSM 5306 / Rt17-B1).